A 719-amino-acid chain; its full sequence is Polyribonucleotide nucleotidyltransferase (719 aa).

Mg(2+)-binding residues include Asp-507 and Asp-513. The KH domain occupies 573-633 (PKLELFSVDP…EQIKAAKDYI (61 aa)). Residues 658–719 (GQEFQGIVKK…NGKISVDLCE (62 aa)) enclose the S1 motif domain.

This sequence belongs to the polyribonucleotide nucleotidyltransferase family. Mg(2+) is required as a cofactor.

Its subcellular location is the cytoplasm. The enzyme catalyses RNA(n+1) + phosphate = RNA(n) + a ribonucleoside 5'-diphosphate. Its function is as follows. Involved in mRNA degradation. Catalyzes the phosphorolysis of single-stranded polyribonucleotides processively in the 3'- to 5'-direction. The protein is Polyribonucleotide nucleotidyltransferase of Campylobacter jejuni subsp. jejuni serotype O:2 (strain ATCC 700819 / NCTC 11168).